Consider the following 222-residue polypeptide: Glutathione S-transferase A2 (222 aa).

N-acetylalanine is present on Ala-2. Positions 3–83 constitute a GST N-terminal domain; that stretch reads GKPVLHYFNA…YIATKYDLYG (81 aa). An N6-succinyllysine modification is found at Lys-4. Residues Tyr-9, Lys-45, 54–55, and 67–68 each bind glutathione; these read QV and QT. The 124-residue stretch at 85–208 folds into the GST C-terminal domain; sequence DMKERALIDM…HPGSQRKPPL (124 aa).

The protein belongs to the GST superfamily. Alpha family. Homodimer. Heterodimer of GSTA1 and GSTA2. In terms of tissue distribution, expressed in the kidney.

The enzyme catalyses RX + glutathione = an S-substituted glutathione + a halide anion + H(+). Its function is as follows. Catalyzes the conjugation of glutathione to a large variety of electrophilic compounds. The chain is Glutathione S-transferase A2 (Gsta2) from Mus musculus (Mouse).